The sequence spans 201 residues: Lipopolysaccharide core heptose(II)-phosphate phosphatase (201 aa).

The first 35 residues, 1 to 35 (MLAFTLRFIKNKRYFAILAGALVIIAGLTSQHAWS), serve as a signal peptide directing secretion.

Belongs to the phosphoglycerate mutase family. Ais subfamily.

The protein localises to the periplasm. It functions in the pathway bacterial outer membrane biogenesis; lipopolysaccharide metabolism. Functionally, catalyzes the dephosphorylation of heptose(II) of the outer membrane lipopolysaccharide core. This is Lipopolysaccharide core heptose(II)-phosphate phosphatase from Salmonella enteritidis PT4 (strain P125109).